Consider the following 531-residue polypeptide: Putative heme-binding protein HQ_1094A (531 aa).

His177 is a binding site for heme. Residues 269-340 are disordered; the sequence is AHGEAHGHAH…STNTNTQDSE (72 aa). A compositionally biased stretch (basic and acidic residues) spans 271–281; sequence GEAHGHAHGDS. The segment covering 284–306 has biased composition (gly residues); that stretch reads GSGGGGGSSHGQSPGGASAGGSA. Over residues 308-317 the composition is skewed to basic and acidic residues; the sequence is GTEDADHSDS. Residues 318–338 show a composition bias toward low complexity; sequence RSTTSADTTQSDTSTNTNTQD. The ABM domain occupies 441 to 529; sequence GTMGMFYTVK…VLSERPRHVF (89 aa).

This sequence in the N-terminal section; belongs to the ChdC family.

The chain is Putative heme-binding protein HQ_1094A from Haloquadratum walsbyi (strain DSM 16790 / HBSQ001).